We begin with the raw amino-acid sequence, 252 residues long: Chitooligosaccharide deacetylase (252 aa).

Residues H61 and H125 each coordinate Mg(2+).

It belongs to the YdjC deacetylase family. ChbG subfamily. As to quaternary structure, homodimer. It depends on Mg(2+) as a cofactor.

Its subcellular location is the cytoplasm. It carries out the reaction N,N'-diacetylchitobiose + H2O = N-acetyl-beta-D-glucosaminyl-(1-&gt;4)-D-glucosamine + acetate. It catalyses the reaction diacetylchitobiose-6'-phosphate + H2O = N'-monoacetylchitobiose-6'-phosphate + acetate. The protein operates within glycan degradation; chitin degradation. Involved in the degradation of chitin. ChbG is essential for growth on the acetylated chitooligosaccharides chitobiose and chitotriose but is dispensable for growth on cellobiose and chitosan dimer, the deacetylated form of chitobiose. Deacetylation of chitobiose-6-P and chitotriose-6-P is necessary for both the activation of the chb promoter by the regulatory protein ChbR and the hydrolysis of phosphorylated beta-glucosides by the phospho-beta-glucosidase ChbF. Catalyzes the removal of only one acetyl group from chitobiose-6-P to yield monoacetylchitobiose-6-P, the inducer of ChbR and the substrate of ChbF. This Escherichia coli O6:K15:H31 (strain 536 / UPEC) protein is Chitooligosaccharide deacetylase.